An 855-amino-acid chain; its full sequence is DNA mismatch repair protein MutS (855 aa).

616–623 is an ATP binding site; it reads GPNMGGKS.

The protein belongs to the DNA mismatch repair MutS family.

This protein is involved in the repair of mismatches in DNA. It is possible that it carries out the mismatch recognition step. This protein has a weak ATPase activity. In Salmonella newport (strain SL254), this protein is DNA mismatch repair protein MutS.